We begin with the raw amino-acid sequence, 176 residues long: DNA-directed RNA polymerase II subunit 7 (176 aa).

It belongs to the eukaryotic RPB7/RPC8 RNA polymerase subunit family. In terms of assembly, component of the RNA polymerase II complex consisting of at least 12 subunits. Interacts with NRPB4.

The protein localises to the nucleus. DNA-dependent RNA polymerase catalyzes the transcription of DNA into RNA using the four ribonucleoside triphosphates as substrates. Component of RNA polymerase II which synthesizes mRNA precursors and many functional non-coding RNAs. Pol II is the central component of the basal RNA polymerase II transcription machinery. It is composed of mobile elements that move relative to each other. NRPB7 is part of a subcomplex with NRPB4 that binds to a pocket formed by NRPB1, NRPB2 and NRPB6 at the base of the clamp element. The NRBP4-NRPB7 subcomplex seems to lock the clamp via NRPB7 in the closed conformation thus preventing double-stranded DNA to enter the active site cleft. The NRPB4-NRPB7 subcomplex binds single-stranded DNA and RNA. The chain is DNA-directed RNA polymerase II subunit 7 (NRPB7) from Arabidopsis thaliana (Mouse-ear cress).